The primary structure comprises 367 residues: Histidinol-phosphate aminotransferase 1 (367 aa).

At K226 the chain carries N6-(pyridoxal phosphate)lysine.

This sequence belongs to the class-II pyridoxal-phosphate-dependent aminotransferase family. Histidinol-phosphate aminotransferase subfamily. Homodimer. It depends on pyridoxal 5'-phosphate as a cofactor.

The catalysed reaction is L-histidinol phosphate + 2-oxoglutarate = 3-(imidazol-4-yl)-2-oxopropyl phosphate + L-glutamate. The protein operates within amino-acid biosynthesis; L-histidine biosynthesis; L-histidine from 5-phospho-alpha-D-ribose 1-diphosphate: step 7/9. The protein is Histidinol-phosphate aminotransferase 1 (hisC1) of Haemophilus influenzae (strain ATCC 51907 / DSM 11121 / KW20 / Rd).